Reading from the N-terminus, the 408-residue chain is Putative mannan endo-1,4-beta-mannosidase P (408 aa).

A signal peptide spans 1–23 (MKCLCFIVLLAIVIAQSYVGVEA). Residue Asn73 is glycosylated (N-linked (GlcNAc...) asparagine). Trp85 and Asn201 together coordinate substrate. The active-site Proton donor is the Glu202. Glu322 functions as the Nucleophile in the catalytic mechanism. Trp364 provides a ligand contact to substrate.

Belongs to the glycosyl hydrolase 5 (cellulase A) family.

Its subcellular location is the secreted. It carries out the reaction Random hydrolysis of (1-&gt;4)-beta-D-mannosidic linkages in mannans, galactomannans and glucomannans.. The chain is Putative mannan endo-1,4-beta-mannosidase P (MANP) from Arabidopsis thaliana (Mouse-ear cress).